The following is a 735-amino-acid chain: Disintegrin and metalloproteinase domain-containing protein 2 (735 aa).

Positions 1-15 (MLCLLLLLCGLASLG) are cleaved as a signal peptide. A propeptide spanning residues 16 to 176 (GPLKKYVENS…KIKSIKSSVR (161 aa)) is cleaved from the precursor. The Extracellular portion of the chain corresponds to 16–680 (GPLKKYVENS…EGAYHTKSRK (665 aa)). Asn-55, Asn-220, and Asn-288 each carry an N-linked (GlcNAc...) asparagine glycan. Residues 178-375 (HYIEMHIIVE…QVSQCLQNQP (198 aa)) enclose the Peptidase M12B domain. Cystine bridges form between Cys-287–Cys-370, Cys-329–Cys-354, Cys-331–Cys-336, and Cys-442–Cys-455. A glycan (N-linked (GlcNAc...) asparagine) is linked at Asn-353. Residues 384-470 (NPVCGNNRVE…ACQEDLYVIN (87 aa)) form the Disintegrin domain. 2 N-linked (GlcNAc...) asparagine glycosylation sites follow: Asn-456 and Asn-564. Positions 610–643 (LGYDCTPATCSDHGVCNNKRHCHCNPTYVPPNCE) constitute an EGF-like domain. Cystine bridges form between Cys-614/Cys-625, Cys-619/Cys-631, and Cys-633/Cys-642. A helical transmembrane segment spans residues 681-701 (WPFFLIIPFFVIFSVLVATVV). The Cytoplasmic segment spans residues 702–735 (KVYYQKKKWKTEDYANDENIESESEPKSSKVSSK). Positions 716-735 (ANDENIESESEPKSSKVSSK) are disordered. At Ser-723 the chain carries Phosphoserine.

Heterodimer with ADAM1/fertilin subunit alpha. Post-translationally, the signal and the metalloprotease domain are cleaved during the epididymal maturation of the spermatozoa. As to expression, expressed specifically in testis.

It localises to the membrane. Its function is as follows. Sperm surface membrane protein that may be involved in sperm-egg plasma membrane adhesion and fusion during fertilization. Could have a direct role in sperm-zona binding or migration of sperm from the uterus into the oviduct. Interactions with egg membrane could be mediated via binding between its disintegrin-like domain to one or more integrins receptors on the egg. This is a non catalytic metalloprotease-like protein. This Cavia porcellus (Guinea pig) protein is Disintegrin and metalloproteinase domain-containing protein 2 (ADAM2).